A 1189-amino-acid chain; its full sequence is Tyrosine-protein phosphatase non-receptor type 14 (1189 aa).

Positions 21–306 (FVTRIRLLDS…TRHKFYKQNK (286 aa)) constitute an FERM domain. Residues Ser314, Ser461, Ser486, Ser591, Ser593, Ser594, and Ser646 each carry the phosphoserine modification. Residues 744-775 (ARIPNRPPPEYPGPRKSVSNGALRQDQGTPLP) form a disordered region. Over residues 760–771 (SVSNGALRQDQG) the composition is skewed to polar residues. Residue Ser833 is modified to Phosphoserine. The Tyrosine-protein phosphatase domain maps to 911–1182 (VFTEYEQIPN…KFVYQVLVQF (272 aa)). The active-site Phosphocysteine intermediate is the Cys1123. Substrate-binding positions include 1123-1129 (CSAGVGR) and Gln1167.

The protein belongs to the protein-tyrosine phosphatase family. Non-receptor class subfamily. Interacts with FLT4; the interaction is enhanced by stimulation with VEGFC. Interacts (via PPxY motifs) with YAP1 (via WW domains); this interaction leads to the cytoplasmic sequestration of YAP1 and inhibits its transcriptional coactivator activity. Post-translationally, ubiquitinated by the ECS (Elongin BC-CUL2/5-SOCS-box protein)/LRR1 E3 ligase complex and subsequently targeted to proteasomal degradation. Thymus; in cells of both hematopoietic and non-hematopoietic origins.

It localises to the cytoplasm. It is found in the cytoskeleton. The protein resides in the nucleus. The enzyme catalyses O-phospho-L-tyrosyl-[protein] + H2O = L-tyrosyl-[protein] + phosphate. Protein tyrosine phosphatase which may play a role in the regulation of lymphangiogenesis, cell-cell adhesion, cell-matrix adhesion, cell migration, cell growth and also regulates TGF-beta gene expression, thereby modulating epithelial-mesenchymal transition. Mediates beta-catenin dephosphorylation at adhesion junctions. Acts as a negative regulator of the oncogenic property of YAP, a downstream target of the hippo pathway, in a cell density-dependent manner. May function as a tumor suppressor. The sequence is that of Tyrosine-protein phosphatase non-receptor type 14 (Ptpn14) from Mus musculus (Mouse).